Here is an 835-residue protein sequence, read N- to C-terminus: Replication origin-binding protein (835 aa).

The Helicase ATP-binding domain maps to 54–215; the sequence is PGMSQTRPVT…SGLRGDENIH (162 aa). Position 67-74 (67-74) interacts with ATP; the sequence is APMGSGKT.

It belongs to the herpesviridae OriBP family. Homodimer. Interacts with the major DNA-binding protein. Interacts with the helicase/primase component 52 and the polymerase accessory protein.

Its subcellular location is the host nucleus. Its function is as follows. Functions as a docking protein to recruit essential components of the viral replication machinery to viral DNA origins. In the presence of the major DNA-binding protein, opens dsDNA leading to a conformational change in the origin that facilitates DNA unwinding and subsequent replication. The polypeptide is Replication origin-binding protein (Varicella-zoster virus (strain Oka vaccine) (HHV-3)).